We begin with the raw amino-acid sequence, 426 residues long: Tyrosine-protein phosphatase non-receptor type 20 (426 aa).

Residues 1 to 10 are compositionally biased toward basic residues; that stretch reads MSSPRKVRGK. A disordered region spans residues 1-58; it reads MSSPRKVRGKTGRDNDEEEGNSGNLNLRNSLPSSSQKMTPTKPIFGNKMNSENVKPSH. Residues 21–35 show a composition bias toward low complexity; it reads NSGNLNLRNSLPSSS. S76 bears the Phosphoserine mark. Residues 95 to 117 show a composition bias toward polar residues; sequence NSMDSETAGPSKTVSPVLSGSSR. Residues 95–124 are disordered; sequence NSMDSETAGPSKTVSPVLSGSSRLSKDTET. S127 carries the phosphoserine modification. The 254-residue stretch at 165–418 folds into the Tyrosine-protein phosphatase domain; it reads IIREFLELEQ…QFCYEIVLEV (254 aa). Residues D329, 359-365, and Q403 each bind substrate; that span reads CSAGVGR. The active-site Phosphocysteine intermediate is C359.

The protein belongs to the protein-tyrosine phosphatase family. Non-receptor class subfamily. Testis-specific. Specifically expressed in testicular germ cells that undergo meiosis (at protein level).

It is found in the nucleus. The protein localises to the cytoplasm. The protein resides in the cytoskeleton. Its subcellular location is the microtubule organizing center. It localises to the centrosome. It carries out the reaction O-phospho-L-tyrosyl-[protein] + H2O = L-tyrosyl-[protein] + phosphate. In terms of biological role, tyrosine-protein phosphatase targeted to sites of actin polymerization in response of varied extracellular stimuli. Has tyrosine phosphatase activity towards various tyrosyl phosphorylated substrates. The polypeptide is Tyrosine-protein phosphatase non-receptor type 20 (Ptpn20) (Mus musculus (Mouse)).